Consider the following 148-residue polypeptide: 3-dehydroquinate dehydratase (148 aa).

Tyr-23 serves as the catalytic Proton acceptor. Substrate contacts are provided by Asn-75, His-81, and Asp-88. The Proton donor role is filled by His-101. Substrate contacts are provided by residues 102–103 (MS) and Arg-112.

Belongs to the type-II 3-dehydroquinase family. Homododecamer.

It catalyses the reaction 3-dehydroquinate = 3-dehydroshikimate + H2O. Its pathway is metabolic intermediate biosynthesis; chorismate biosynthesis; chorismate from D-erythrose 4-phosphate and phosphoenolpyruvate: step 3/7. Functionally, catalyzes a trans-dehydration via an enolate intermediate. The chain is 3-dehydroquinate dehydratase from Syntrophotalea carbinolica (strain DSM 2380 / NBRC 103641 / GraBd1) (Pelobacter carbinolicus).